The following is a 141-amino-acid chain: Putative nickel-responsive regulator (141 aa).

4 residues coordinate Ni(2+): histidine 80, histidine 91, histidine 93, and cysteine 99.

It belongs to the transcriptional regulatory CopG/NikR family. It depends on Ni(2+) as a cofactor.

Its function is as follows. Transcriptional regulator. The chain is Putative nickel-responsive regulator from Methanococcus maripaludis (strain C6 / ATCC BAA-1332).